The following is a 1371-amino-acid chain: Serine protease pic autotransporter (1371 aa).

The first 55 residues, 1 to 55 (MNKVYSLKYCPVTGGLIVVSELASRVIKKTCRRLTHILLAGIPAVYLYYPQISQA), serve as a signal peptide directing secretion. The region spanning 56–301 (GIVRSDIAYQ…NVIPTDYLNQ (246 aa)) is the Peptidase S6 domain. Residues His127, Asp155, and Ser258 each act as charge relay system in the active site. An Autotransporter domain is found at 1105-1371 (DTNGDAGAWA…AVNANFRYMF (267 aa)).

In terms of processing, cleaved to release the mature protein from the outer membrane.

The protein localises to the periplasm. It is found in the secreted. Its subcellular location is the cell surface. It localises to the cell outer membrane. Functionally, involved in virulence of uropathogenic E.coli although it is not known how it contributes to it. Has no mucinase activity. This Escherichia coli O6:H1 (strain CFT073 / ATCC 700928 / UPEC) protein is Serine protease pic autotransporter (pic).